We begin with the raw amino-acid sequence, 401 residues long: Imidazolonepropionase (401 aa).

Residues His66 and His68 each coordinate Fe(3+). Zn(2+) is bound by residues His66 and His68. 3 residues coordinate 4-imidazolone-5-propanoate: Arg75, Tyr138, and His171. Tyr138 serves as a coordination point for N-formimidoyl-L-glutamate. His236 lines the Fe(3+) pocket. Residue His236 coordinates Zn(2+). Position 239 (Gln239) interacts with 4-imidazolone-5-propanoate. Asp311 contacts Fe(3+). Asp311 lines the Zn(2+) pocket. N-formimidoyl-L-glutamate-binding residues include Asn313 and Gly315. A 4-imidazolone-5-propanoate-binding site is contributed by Thr316.

The protein belongs to the metallo-dependent hydrolases superfamily. HutI family. Zn(2+) is required as a cofactor. The cofactor is Fe(3+).

The protein resides in the cytoplasm. The enzyme catalyses 4-imidazolone-5-propanoate + H2O = N-formimidoyl-L-glutamate. It functions in the pathway amino-acid degradation; L-histidine degradation into L-glutamate; N-formimidoyl-L-glutamate from L-histidine: step 3/3. Its function is as follows. Catalyzes the hydrolytic cleavage of the carbon-nitrogen bond in imidazolone-5-propanoate to yield N-formimidoyl-L-glutamate. It is the third step in the universal histidine degradation pathway. This Pseudomonas putida (strain ATCC 700007 / DSM 6899 / JCM 31910 / BCRC 17059 / LMG 24140 / F1) protein is Imidazolonepropionase.